Here is a 41-residue protein sequence, read N- to C-terminus: U-megalopygitoxin(4)-Mo5 (41 aa).

A signal peptide spans 1–23 (MKCSLLLVVFAAMVALFAAGTNA).

Belongs to the caterpillar 4 family. As to expression, expressed by the venom apparatus.

The protein localises to the secreted. Functionally, probable toxin. This is U-megalopygitoxin(4)-Mo5 from Megalopyge opercularis (Southern flannel moth).